A 225-amino-acid chain; its full sequence is NAD(P)H-quinone oxidoreductase subunit K, chloroplastic (225 aa).

Residues Cys43, Cys44, Cys108, and Cys139 each coordinate [4Fe-4S] cluster.

This sequence belongs to the complex I 20 kDa subunit family. NDH is composed of at least 16 different subunits, 5 of which are encoded in the nucleus. It depends on [4Fe-4S] cluster as a cofactor.

It localises to the plastid. It is found in the chloroplast thylakoid membrane. The catalysed reaction is a plastoquinone + NADH + (n+1) H(+)(in) = a plastoquinol + NAD(+) + n H(+)(out). It catalyses the reaction a plastoquinone + NADPH + (n+1) H(+)(in) = a plastoquinol + NADP(+) + n H(+)(out). Its function is as follows. NDH shuttles electrons from NAD(P)H:plastoquinone, via FMN and iron-sulfur (Fe-S) centers, to quinones in the photosynthetic chain and possibly in a chloroplast respiratory chain. The immediate electron acceptor for the enzyme in this species is believed to be plastoquinone. Couples the redox reaction to proton translocation, and thus conserves the redox energy in a proton gradient. In Daucus carota (Wild carrot), this protein is NAD(P)H-quinone oxidoreductase subunit K, chloroplastic.